A 72-amino-acid chain; its full sequence is Translation initiation factor IF-1 2 (72 aa).

The S1-like domain maps to 1–72 (MAKDDVIQMQ…SRARIVFRTK (72 aa)).

It belongs to the IF-1 family. As to quaternary structure, component of the 30S ribosomal translation pre-initiation complex which assembles on the 30S ribosome in the order IF-2 and IF-3, IF-1 and N-formylmethionyl-tRNA(fMet); mRNA recruitment can occur at any time during PIC assembly.

Its subcellular location is the cytoplasm. Functionally, one of the essential components for the initiation of protein synthesis. Stabilizes the binding of IF-2 and IF-3 on the 30S subunit to which N-formylmethionyl-tRNA(fMet) subsequently binds. Helps modulate mRNA selection, yielding the 30S pre-initiation complex (PIC). Upon addition of the 50S ribosomal subunit IF-1, IF-2 and IF-3 are released leaving the mature 70S translation initiation complex. This Cupriavidus metallidurans (strain ATCC 43123 / DSM 2839 / NBRC 102507 / CH34) (Ralstonia metallidurans) protein is Translation initiation factor IF-1 2.